We begin with the raw amino-acid sequence, 416 residues long: Alpha-1,3/1,6-mannosyltransferase ALG2 (416 aa).

At 1–84 the chain is on the cytoplasmic side; that stretch reads MAEEQGRERD…LPRGLGWGGR (84 aa). An intramembrane region (helical) is located at residues 85 to 105; it reads GAAVCAYVRMVFLALYVLFLA. Over 106–416 the chain is Cytoplasmic; that stretch reads DEEFDVVVCD…LYRYVTKLLV (311 aa).

Belongs to the glycosyltransferase group 1 family. Glycosyltransferase 4 subfamily.

The protein resides in the endoplasmic reticulum membrane. The enzyme catalyses a beta-D-Man-(1-&gt;4)-beta-D-GlcNAc-(1-&gt;4)-alpha-D-GlcNAc-diphospho-di-trans,poly-cis-dolichol + GDP-alpha-D-mannose = an alpha-D-Man-(1-&gt;3)-beta-D-Man-(1-&gt;4)-beta-D-GlcNAc-(1-&gt;4)-alpha-D-GlcNAc-diphospho-di-trans,poly-cis-dolichol + GDP + H(+). The catalysed reaction is an alpha-D-Man-(1-&gt;3)-beta-D-Man-(1-&gt;4)-beta-D-GlcNAc-(1-&gt;4)-alpha-D-GlcNAc-diphospho-di-trans,poly-cis-dolichol + GDP-alpha-D-mannose = an alpha-D-Man-(1-&gt;3)-[alpha-D-Man-(1-&gt;6)]-beta-D-Man-(1-&gt;4)-beta-D-GlcNAc-(1-&gt;4)-alpha-D-GlcNAc-diphospho-di-trans,poly-cis-dolichol + GDP + H(+). It catalyses the reaction a beta-D-Man-(1-&gt;4)-beta-D-GlcNAc-(1-&gt;4)-alpha-D-GlcNAc-diphospho-di-trans,poly-cis-dolichol + GDP-alpha-D-mannose = an alpha-D-Man-(1-&gt;6)-beta-D-Man-(1-&gt;4)-beta-D-GlcNAc-(1-&gt;4)-alpha-D-GlcNAc-diphospho-di-trans,poly-cis-dolichol + GDP + H(+). It carries out the reaction an alpha-D-Man-(1-&gt;6)-beta-D-Man-(1-&gt;4)-beta-D-GlcNAc-(1-&gt;4)-alpha-D-GlcNAc-diphospho-di-trans,poly-cis-dolichol + GDP-alpha-D-mannose = an alpha-D-Man-(1-&gt;3)-[alpha-D-Man-(1-&gt;6)]-beta-D-Man-(1-&gt;4)-beta-D-GlcNAc-(1-&gt;4)-alpha-D-GlcNAc-diphospho-di-trans,poly-cis-dolichol + GDP + H(+). The protein operates within protein modification; protein glycosylation. Functionally, mannosyltransferase that operates in the biosynthetic pathway of dolichol-linked oligosaccharides, the glycan precursors employed in protein asparagine (N)-glycosylation. The assembly of dolichol-linked oligosaccharides begins on the cytosolic side of the endoplasmic reticulum membrane and finishes in its lumen. The sequential addition of sugars to dolichol pyrophosphate produces dolichol-linked oligosaccharides containing fourteen sugars, including two GlcNAcs, nine mannoses and three glucoses. Once assembled, the oligosaccharide is transferred from the lipid to nascent proteins by oligosaccharyltransferases. Catalyzes, on the cytoplasmic face of the endoplasmic reticulum, the addition of the second and third mannose residues to the dolichol-linked oligosaccharide chain, to produce Man3GlcNAc(2)-PP-dolichol core oligosaccharide. Man3GlcNAc(2)-PP-dolichol is a substrate for ALG11, the following enzyme in the biosynthetic pathway. While both alpha 1,3 and alpha 1,6 linkages are possible, the sequential addition of alpha 1,3 followed by alpha 1,6 is probably the preferred route. The sequence is that of Alpha-1,3/1,6-mannosyltransferase ALG2 (ALG2) from Homo sapiens (Human).